The chain runs to 271 residues: Bifunctional protein FolD (271 aa).

NADP(+)-binding positions include 154 to 156 (GRS), T181, and I222.

This sequence belongs to the tetrahydrofolate dehydrogenase/cyclohydrolase family. Homodimer.

The enzyme catalyses (6R)-5,10-methylene-5,6,7,8-tetrahydrofolate + NADP(+) = (6R)-5,10-methenyltetrahydrofolate + NADPH. It catalyses the reaction (6R)-5,10-methenyltetrahydrofolate + H2O = (6R)-10-formyltetrahydrofolate + H(+). It functions in the pathway one-carbon metabolism; tetrahydrofolate interconversion. Its function is as follows. Catalyzes the oxidation of 5,10-methylenetetrahydrofolate to 5,10-methenyltetrahydrofolate and then the hydrolysis of 5,10-methenyltetrahydrofolate to 10-formyltetrahydrofolate. The protein is Bifunctional protein FolD of Thermosipho africanus (strain TCF52B).